A 335-amino-acid polypeptide reads, in one-letter code: MAARTRETGNTATVAETAVKQVQIDGMVVLKIIKHYQEEGHGSEVVQGVLLGLVVDDRLEITNCFPFPQHTEDDVDFDEVQYQMEMMRSLRHVNIDHLHVGWYQSTFYGTFVSRALLDSQFSYQHAIEESVVLIYDPIKTGQGSLSLKAYRLTPKLMEVCKEKDFSAEGLKKANIAFEDMFEEVPIIIKNSHLINVLAWELDKKAPVTEKHELLNLSSSNHLEKSLQLLMDRVDELSQDIVKYNTYLRNISKQQQQKHQYTQRRQQENLQRQSRGETSLPEEDVNKLFKPPVPPSRMDSLLIAGQINTYIQHIKEFTSQNLGKLFMAEAMQDPTI.

The region spanning 22–156 (VQIDGMVVLK…LKAYRLTPKL (135 aa)) is the MPN domain. The span at 254-263 (QQQKHQYTQR) shows a compositional bias: low complexity. Positions 254–287 (QQQKHQYTQRRQQENLQRQSRGETSLPEEDVNKL) are disordered. The segment covering 267-276 (ENLQRQSRGE) has biased composition (polar residues).

It belongs to the eIF-3 subunit H family. As to quaternary structure, component of the eukaryotic translation initiation factor 3 (eIF-3) complex, which is composed of 13 subunits: eif3a, eif3b, eif3c, eif3d, eif3e, eif3f, eif3g, eif3h, eif3i, eif3j, eif3k, eif3l and eif3m.

It is found in the cytoplasm. Functionally, component of the eukaryotic translation initiation factor 3 (eIF-3) complex, which is involved in protein synthesis of a specialized repertoire of mRNAs and, together with other initiation factors, stimulates binding of mRNA and methionyl-tRNAi to the 40S ribosome. The eIF-3 complex specifically targets and initiates translation of a subset of mRNAs involved in cell proliferation. This is Eukaryotic translation initiation factor 3 subunit H (eif3h) from Xenopus tropicalis (Western clawed frog).